The primary structure comprises 67 residues: Cold shock-like protein CspE (67 aa).

Residues 5–64 (GKVKWFNSEKGFGFIEVEGGNDVFVHFSAITGDGFKSLDEGQEVSFEVEDGNRGPQAKNV) enclose the CSD domain.

Homodimer.

It localises to the cytoplasm. In terms of biological role, can bind to ATTGG and CCAAT motifs (Y-box motifs) of single-stranded oligonucleotides. In Bacillus anthracis, this protein is Cold shock-like protein CspE (cspE).